We begin with the raw amino-acid sequence, 370 residues long: Ferrochelatase (370 aa).

His210 and Glu291 together coordinate Fe cation.

Belongs to the ferrochelatase family.

The protein localises to the cytoplasm. It catalyses the reaction heme b + 2 H(+) = protoporphyrin IX + Fe(2+). It functions in the pathway porphyrin-containing compound metabolism; protoheme biosynthesis; protoheme from protoporphyrin-IX: step 1/1. Functionally, catalyzes the ferrous insertion into protoporphyrin IX. The sequence is that of Ferrochelatase from Marinobacter nauticus (strain ATCC 700491 / DSM 11845 / VT8) (Marinobacter aquaeolei).